Consider the following 208-residue polypeptide: ATP synthase subunit b (208 aa).

Positions 1–27 (MVKAKKLVFKWSLLVFSFFTLSLFLVS) are cleaved as a signal peptide. Residue C28 is the site of N-palmitoyl cysteine attachment. C28 carries the S-diacylglycerol cysteine lipid modification. The helical transmembrane segment at 49-69 (WVFITHLLAFFILLTLMIFLF) threads the bilayer.

It belongs to the ATPase B chain family. F-type ATPases have 2 components, F(1) - the catalytic core - and F(0) - the membrane proton channel. F(1) has five subunits: alpha(3), beta(3), gamma(1), delta(1), epsilon(1). F(0) has three main subunits: a(1), b(2) and c(10-14). The alpha and beta chains form an alternating ring which encloses part of the gamma chain. F(1) is attached to F(0) by a central stalk formed by the gamma and epsilon chains, while a peripheral stalk is formed by the delta and b chains.

The protein resides in the cell membrane. F(1)F(0) ATP synthase produces ATP from ADP in the presence of a proton or sodium gradient. F-type ATPases consist of two structural domains, F(1) containing the extramembraneous catalytic core and F(0) containing the membrane proton channel, linked together by a central stalk and a peripheral stalk. During catalysis, ATP synthesis in the catalytic domain of F(1) is coupled via a rotary mechanism of the central stalk subunits to proton translocation. Functionally, component of the F(0) channel, it forms part of the peripheral stalk, linking F(1) to F(0). This is ATP synthase subunit b from Mycoplasma genitalium (strain ATCC 33530 / DSM 19775 / NCTC 10195 / G37) (Mycoplasmoides genitalium).